Consider the following 505-residue polypeptide: Trans-cinnamate 4-monooxygenase (505 aa).

A helical transmembrane segment spans residues 3-23 (LLLLEKTLLGLFAAIIVASIV). (E)-cinnamate-binding positions include 213-218 (RSRLAQ) and A306. C447 lines the heme pocket.

Belongs to the cytochrome P450 family. Requires heme as cofactor.

It localises to the membrane. It catalyses the reaction (E)-cinnamate + reduced [NADPH--hemoprotein reductase] + O2 = (E)-4-coumarate + oxidized [NADPH--hemoprotein reductase] + H2O + H(+). Its pathway is phenylpropanoid metabolism; trans-4-coumarate biosynthesis; trans-4-coumarate from trans-cinnamate: step 1/1. Catalyzes the first oxidative step of the phenylpropanoid pathway in higher plants by transforming trans-cinnamate into p-coumarate. The compounds formed by this pathway are essential components for lignification, pollination, and defense against ultraviolet light, predators and pathogens. This chain is Trans-cinnamate 4-monooxygenase (CYP73A4), found in Catharanthus roseus (Madagascar periwinkle).